The following is a 432-amino-acid chain: D-amino acid dehydrogenase (432 aa).

V3–W17 is an FAD binding site.

Belongs to the DadA oxidoreductase family. FAD is required as a cofactor.

It catalyses the reaction a D-alpha-amino acid + A + H2O = a 2-oxocarboxylate + AH2 + NH4(+). It participates in amino-acid degradation; D-alanine degradation; NH(3) and pyruvate from D-alanine: step 1/1. Oxidative deamination of D-amino acids. The sequence is that of D-amino acid dehydrogenase from Cronobacter sakazakii (strain ATCC BAA-894) (Enterobacter sakazakii).